Consider the following 163-residue polypeptide: SsrA-binding protein (163 aa).

This sequence belongs to the SmpB family.

The protein resides in the cytoplasm. In terms of biological role, required for rescue of stalled ribosomes mediated by trans-translation. Binds to transfer-messenger RNA (tmRNA), required for stable association of tmRNA with ribosomes. tmRNA and SmpB together mimic tRNA shape, replacing the anticodon stem-loop with SmpB. tmRNA is encoded by the ssrA gene; the 2 termini fold to resemble tRNA(Ala) and it encodes a 'tag peptide', a short internal open reading frame. During trans-translation Ala-aminoacylated tmRNA acts like a tRNA, entering the A-site of stalled ribosomes, displacing the stalled mRNA. The ribosome then switches to translate the ORF on the tmRNA; the nascent peptide is terminated with the 'tag peptide' encoded by the tmRNA and targeted for degradation. The ribosome is freed to recommence translation, which seems to be the essential function of trans-translation. The protein is SsrA-binding protein of Buchnera aphidicola subsp. Schizaphis graminum (strain Sg).